Here is a 113-residue protein sequence, read N- to C-terminus: Endoribonuclease SymE (113 aa).

Residues glycine 29 to proline 74 form the SpoVT-AbrB domain.

The protein belongs to the SymE family.

It localises to the cytoplasm. Its function is as follows. Involved in the degradation and recycling of damaged RNA. It is itself a target for degradation by the ATP-dependent protease Lon. This Escherichia coli O7:K1 (strain IAI39 / ExPEC) protein is Endoribonuclease SymE.